A 443-amino-acid polypeptide reads, in one-letter code: ATP-dependent protease ATPase subunit HslU (443 aa).

ATP is bound by residues Ile-20, 62–67 (GVGKTE), Asp-255, Glu-321, and Arg-393.

Belongs to the ClpX chaperone family. HslU subfamily. As to quaternary structure, a double ring-shaped homohexamer of HslV is capped on each side by a ring-shaped HslU homohexamer. The assembly of the HslU/HslV complex is dependent on binding of ATP.

It is found in the cytoplasm. Its function is as follows. ATPase subunit of a proteasome-like degradation complex; this subunit has chaperone activity. The binding of ATP and its subsequent hydrolysis by HslU are essential for unfolding of protein substrates subsequently hydrolyzed by HslV. HslU recognizes the N-terminal part of its protein substrates and unfolds these before they are guided to HslV for hydrolysis. The sequence is that of ATP-dependent protease ATPase subunit HslU from Helicobacter pylori (strain P12).